A 182-amino-acid chain; its full sequence is Inosine/xanthosine triphosphatase (182 aa).

The protein belongs to the YjjX NTPase family. Homodimer. It depends on Mg(2+) as a cofactor. Requires Mn(2+) as cofactor.

It catalyses the reaction XTP + H2O = XDP + phosphate + H(+). It carries out the reaction ITP + H2O = IDP + phosphate + H(+). In terms of biological role, phosphatase that hydrolyzes non-canonical purine nucleotides such as XTP and ITP to their respective diphosphate derivatives. Probably excludes non-canonical purines from DNA/RNA precursor pool, thus preventing their incorporation into DNA/RNA and avoiding chromosomal lesions. In Vibrio parahaemolyticus serotype O3:K6 (strain RIMD 2210633), this protein is Inosine/xanthosine triphosphatase.